The primary structure comprises 295 residues: Cutinase 11 (295 aa).

The first 17 residues, M1–A17, serve as a signal peptide directing secretion. Residues C25 and C102 are joined by a disulfide bond. Residues S113, D198, and H210 contribute to the active site. C184 and C202 are joined by a disulfide. Positions K228–S258 are disordered. Residues P236–S258 are compositionally biased toward pro residues. Positions S260–L295 constitute a CBM1 domain.

It belongs to the cutinase family. In terms of processing, the 2 disulfide bonds play a critical role in holding the catalytic residues in juxta-position; reduction of the disulfide bridges results in the complete inactivation of the enzyme.

Its subcellular location is the secreted. It carries out the reaction cutin + H2O = cutin monomers.. In terms of biological role, catalyzes the hydrolysis of complex carboxylic polyesters found in the cell wall of plants. May degrade cutin, a macromolecule that forms the structure of the plant cuticle. May also degrade suberin, a specialized macromolecule found in the cell wall of various plant tissues. Allows pathogenic fungi to penetrate through the cuticular barrier into the host plant during the initial stage of fungal infection. Involved in pathogenesis. The sequence is that of Cutinase 11 from Verticillium dahliae (Verticillium wilt).